We begin with the raw amino-acid sequence, 214 residues long: UPF0502 protein Acid345_3645 (214 aa).

Belongs to the UPF0502 family.

This is UPF0502 protein Acid345_3645 from Koribacter versatilis (strain Ellin345).